A 251-amino-acid polypeptide reads, in one-letter code: GTP cyclohydrolase 1 type 2 homolog (251 aa).

5 residues coordinate a divalent metal cation: histidine 64, histidine 65, aspartate 102, histidine 219, and glutamate 223.

Belongs to the GTP cyclohydrolase I type 2/NIF3 family. Homohexamer.

The protein is GTP cyclohydrolase 1 type 2 homolog of Chlamydia pneumoniae (Chlamydophila pneumoniae).